Here is a 343-residue protein sequence, read N- to C-terminus: Phenylalanine--tRNA ligase alpha subunit (343 aa).

Residue E268 participates in Mg(2+) binding.

The protein belongs to the class-II aminoacyl-tRNA synthetase family. Phe-tRNA synthetase alpha subunit type 1 subfamily. As to quaternary structure, tetramer of two alpha and two beta subunits. Mg(2+) is required as a cofactor.

It localises to the cytoplasm. The catalysed reaction is tRNA(Phe) + L-phenylalanine + ATP = L-phenylalanyl-tRNA(Phe) + AMP + diphosphate + H(+). In Cupriavidus taiwanensis (strain DSM 17343 / BCRC 17206 / CCUG 44338 / CIP 107171 / LMG 19424 / R1) (Ralstonia taiwanensis (strain LMG 19424)), this protein is Phenylalanine--tRNA ligase alpha subunit.